We begin with the raw amino-acid sequence, 307 residues long: Voltage-dependent anion channel-forming protein sll1024 (307 aa).

4 helical membrane-spanning segments follow: residues Val-26–Leu-46, Phe-54–Phe-74, Leu-226–Thr-246, and Ala-247–Ile-267.

It belongs to the anion channel-forming bestrophin (TC 1.A.46) family.

Its subcellular location is the cell membrane. The polypeptide is Voltage-dependent anion channel-forming protein sll1024 (Synechocystis sp. (strain ATCC 27184 / PCC 6803 / Kazusa)).